The chain runs to 391 residues: tRNA-specific 2-thiouridylase MnmA (391 aa).

Residues 35-42 and L61 each bind ATP; that span reads GLSGGVDS. The Nucleophile role is filled by C122. The cysteines at positions 122 and 221 are disulfide-linked. G147 contacts ATP. An interaction with tRNA region spans residues 171–173; sequence KDQ. The active-site Cysteine persulfide intermediate is the C221. The segment at 328–329 is interaction with tRNA; the sequence is RY.

The protein belongs to the MnmA/TRMU family.

It localises to the cytoplasm. The catalysed reaction is S-sulfanyl-L-cysteinyl-[protein] + uridine(34) in tRNA + AH2 + ATP = 2-thiouridine(34) in tRNA + L-cysteinyl-[protein] + A + AMP + diphosphate + H(+). Its function is as follows. Catalyzes the 2-thiolation of uridine at the wobble position (U34) of tRNA, leading to the formation of s(2)U34. In Synechococcus sp. (strain CC9311), this protein is tRNA-specific 2-thiouridylase MnmA.